We begin with the raw amino-acid sequence, 98 residues long: N(2)-fixation sustaining protein CowN (98 aa).

Belongs to the CowN family.

Functionally, is required to sustain N(2)-dependent growth in the presence of low levels of carbon monoxide (CO). Probably acts by protecting the N(2) fixation ability of the nitrogenase complex, which is inactivated in the presence of CO. This chain is N(2)-fixation sustaining protein CowN, found in Azospirillum sp. (strain B510).